A 186-amino-acid polypeptide reads, in one-letter code: Thioredoxin M2, chloroplastic (186 aa).

The N-terminal 72 residues, 1–72 (MAAFTCTSRP…RVSRLRRAVV (72 aa)), are a transit peptide targeting the chloroplast. Positions 73–186 (CEAQETTTDI…LTSSLDKFLP (114 aa)) constitute a Thioredoxin domain. Catalysis depends on nucleophile residues cysteine 110 and cysteine 113. An intrachain disulfide couples cysteine 110 to cysteine 113.

It belongs to the thioredoxin family. Plant M-type subfamily. Interacts with G6PD1 and G6PD4. Interacts with PGL3.

It is found in the plastid. The protein resides in the chloroplast stroma. Thiol-disulfide oxidoreductase that may participate in various redox reactions. May activate NADP-malate dehydrogenase. This is Thioredoxin M2, chloroplastic from Arabidopsis thaliana (Mouse-ear cress).